We begin with the raw amino-acid sequence, 137 residues long: Large ribosomal subunit protein uL16c (137 aa).

It belongs to the universal ribosomal protein uL16 family. As to quaternary structure, part of the 50S ribosomal subunit.

The protein resides in the plastid. This chain is Large ribosomal subunit protein uL16c, found in Cuscuta exaltata (Tall dodder).